A 300-amino-acid polypeptide reads, in one-letter code: Iodotyrosine deiodinase (300 aa).

The helical transmembrane segment at 15–31 (VGLISVSIAAGVALGQL) threads the bilayer. FMN-binding positions include 110 to 114 (RRSVR), S138, and 138 to 139 (SG). 3,5-diiodo-L-tyrosine is bound by residues A140, E167, Y171, and K192. The 3-iodo-L-tyrosine site is built by A140, E167, Y171, and K192. FMN-binding positions include 247–249 (TTT) and R289.

Belongs to the nitroreductase family. The cofactor is FMN. May be cleaved at Gln-55. The cleaved form retains catalytic activity.

The protein localises to the membrane. The enzyme catalyses 2 iodide + L-tyrosine + 2 NADP(+) = 3,5-diiodo-L-tyrosine + 2 NADPH + H(+). It carries out the reaction iodide + L-tyrosine + NADP(+) = 3-iodo-L-tyrosine + NADPH. It catalyses the reaction 3-iodo-L-tyrosine + iodide + NADP(+) = 3,5-diiodo-L-tyrosine + NADPH + H(+). The catalysed reaction is L-tyrosine + chloride + NADP(+) = 3-chloro-L-tyrosine + NADPH. The enzyme catalyses bromide + L-tyrosine + NADP(+) = 3-bromo-L-tyrosine + NADPH. Its function is as follows. Catalyzes the dehalogenation of halotyrosines such as 3,5-diiodo-L-tyrosine. Likely to also catalyze the dehalogenation of other halotyrosines such as 3-bromo-L-tyrosine, 3-chloro-L-tyrosine and 3-iodo-L-tyrosine. The sequence is that of Iodotyrosine deiodinase from Daphnia pulex (Water flea).